Here is an 891-residue protein sequence, read N- to C-terminus: Mating-type protein A-alpha Y1 (891 aa).

Residues 146-205 constitute a DNA-binding region (homeobox); the sequence is SKKPRPKFHSEYTPLLELYFRFNAYPTYADRRVLAEKTGMLTRQITVWFQNHRRRAKGPL. 5 disordered regions span residues 241–291, 319–339, 393–437, 610–718, and 800–822; these read PITL…PSTL, DIEM…LPKG, TRKP…RRVS, ARRK…EQSL, and MNWT…GGDE. Positions 244–257 are enriched in polar residues; sequence LGNNKTPDLTTSSR. Residues 328-337 show a composition bias toward basic residues; it reads PKRRKMKKLP. The segment covering 427 to 437 has biased composition (low complexity); sequence ASSTVPSRRVS. A compositionally biased stretch (basic residues) spans 627 to 638; it reads KKDKKERKKAGL. Composition is skewed to low complexity over residues 651 to 667 and 676 to 710; these read VSSR…TSAR and QPSS…SMPS. Polar residues predominate over residues 800–818; the sequence is MNWTASVGSNAQDPASQES.

The protein localises to the nucleus. Its function is as follows. Specifies A-alpha-1 mating-type. May regulate the expression of genes specific to the homokaryotic cell type. The protein is Mating-type protein A-alpha Y1 of Schizophyllum commune (Split gill fungus).